We begin with the raw amino-acid sequence, 243 residues long: MSMLCYTLIIAFLIGIWAAPKSEDNVPLGSPATSDLSDTSCAQTHEGLKTSRNTDQRHPAPKKAEDQELASAANIIVDPKLFQKRRFQSPRVLFSTQPPPLSRDEQSVEFLDNEDTLNRNIRAKRETHPVHNRGEYSVCDSISVWVANKTKAMDIKGKPVTVMVDVNLNNHVYKQYFFETKYRNPNPVPSGCRGIDSGHWNSYCTTTQTYVRALTMEGNQASWRFIRIDAACVCVISRKTENF.

The N-terminal stretch at 1 to 18 (MSMLCYTLIIAFLIGIWA) is a signal peptide. Residues 19–125 (APKSEDNVPL…TLNRNIRAKR (107 aa)) constitute a propeptide that is removed on maturation. The span at 47-66 (GLKTSRNTDQRHPAPKKAED) shows a compositional bias: basic and acidic residues. The tract at residues 47 to 67 (GLKTSRNTDQRHPAPKKAEDQ) is disordered. Disulfide bonds link C139–C204 and C192–C234. N-linked (GlcNAc...) asparagine glycosylation occurs at N148.

This sequence belongs to the NGF-beta family. As to quaternary structure, homodimer; non-covalently linked. As to expression, expressed by the venom gland.

The protein resides in the secreted. Nerve growth factor is important for the development and maintenance of the sympathetic and sensory nervous systems. It stimulates division and differentiation of sympathetic and embryonic sensory neurons as well as basal forebrain cholinergic neurons in the brain. Its relevance in the snake venom is not clear. However, it has been shown to inhibit metalloproteinase-dependent proteolysis of platelet glycoprotein Ib alpha, suggesting a metalloproteinase inhibition to prevent metalloprotease autodigestion and/or protection against prey proteases. Binds a lipid between the two protein chains in the homodimer. The lipid-bound form promotes histamine relase from mouse mast cells, contrary to the lipid-free form. This chain is Venom nerve growth factor 2, found in Pseudonaja textilis (Eastern brown snake).